A 462-amino-acid chain; its full sequence is MAAEKTMEKIVALAKNRGFVYPGSDIYGGLANAWDYGPLGVELKNNVKKAWWLKFIQESPYNVGVDCAILMNPQVWVASGHVGGFSDPLIDCKDCKTRHRADKLIEDWNNENNIEFRVDGLKNEELMQYIKDKGVRCPSCGSANFTDIRKFNLMFKTFQGVTEDSKSEIYLRPETAQGIFVNFKNVQRTTRRKIPFGIGQIGKSFRNEITPGNFTFRTREFEQMELEFFCEPGKDLEWFKYWKDFCYNWLLSLNMKKENLKLRDHEKEELSHYSNATTDIEFLFPFGWGELWGIADRTDFDLKQHMTHSKDDLSYFDPTTNEKYVPYCIEPSLGADRVTLAFLCEAYDEEEVAEGDVRTVLRFHPALAPVKIAVLPLSKKLGEDADKVYQMLAKSYYCEYDETGSIGKRYRRQDEIGTPYCITFDFDSLEDKSVTIRDRDTMQQVRIKIEDLAAYFENKFEF.

Substrate-binding residues include Arg-100 and Glu-174. ATP-binding positions include 206-208 (RNE), 216-221 (FRTREF), 290-291 (EL), and 334-337 (GADR). Residue 221–225 (FEQME) coordinates substrate. A substrate-binding site is contributed by 330 to 334 (EPSLG).

It belongs to the class-II aminoacyl-tRNA synthetase family. Homodimer.

The protein resides in the cytoplasm. It carries out the reaction tRNA(Gly) + glycine + ATP = glycyl-tRNA(Gly) + AMP + diphosphate. Its function is as follows. Catalyzes the attachment of glycine to tRNA(Gly). The sequence is that of Glycine--tRNA ligase from Ruminiclostridium cellulolyticum (strain ATCC 35319 / DSM 5812 / JCM 6584 / H10) (Clostridium cellulolyticum).